The following is a 752-amino-acid chain: Photosystem I P700 chlorophyll a apoprotein A1 (752 aa).

A run of 8 helical transmembrane segments spans residues 73 to 96, 159 to 182, 198 to 222, 294 to 312, 349 to 372, 388 to 414, 436 to 458, and 533 to 551; these read IFSAHFGQLAVIFLWISGMHFHGA, LYWIAIGGLIMSALMLFAGWFHYH, MNHHLAGLLGLGCLSWSGHQIHIAL, IAHHHLALSVLFIFAGHMY, WHAQLAINLAMMGSLSIIVAHHMY, LSLFTHHMWIGGFCVVGGAAHGAIFMV, AIISHLNWVCIFLGCHSFGLYIH, and FMVHHIHAFTIHVTVLILL. Positions 575 and 584 each coordinate [4Fe-4S] cluster. 2 helical membrane passes run 591-612 and 666-688; these read HVFLGLFWMYNSISVVIFHFSW and SSAYGLIFLGAHFIWAFSLMFLF. Chlorophyll a' is bound at residue His-677. Chlorophyll a contacts are provided by Met-685 and Tyr-693. A phylloquinone-binding site is contributed by Trp-694. Residues 726 to 746 traverse the membrane as a helical segment; that stretch reads AVGLAHYLLGGIGTTWSFFLA.

This sequence belongs to the PsaA/PsaB family. In terms of assembly, the PsaA/B heterodimer binds the P700 chlorophyll special pair and subsequent electron acceptors. PSI consists of a core antenna complex that captures photons, and an electron transfer chain that converts photonic excitation into a charge separation. The eukaryotic PSI reaction center is composed of at least 11 subunits. Requires P700 is a chlorophyll a/chlorophyll a' dimer, A0 is one or more chlorophyll a, A1 is one or both phylloquinones and FX is a shared 4Fe-4S iron-sulfur center. as cofactor.

The protein resides in the plastid. It localises to the chloroplast thylakoid membrane. It carries out the reaction reduced [plastocyanin] + hnu + oxidized [2Fe-2S]-[ferredoxin] = oxidized [plastocyanin] + reduced [2Fe-2S]-[ferredoxin]. In terms of biological role, psaA and PsaB bind P700, the primary electron donor of photosystem I (PSI), as well as the electron acceptors A0, A1 and FX. PSI is a plastocyanin/cytochrome c6-ferredoxin oxidoreductase, converting photonic excitation into a charge separation, which transfers an electron from the donor P700 chlorophyll pair to the spectroscopically characterized acceptors A0, A1, FX, FA and FB in turn. Oxidized P700 is reduced on the lumenal side of the thylakoid membrane by plastocyanin or cytochrome c6. In Trieres chinensis (Marine centric diatom), this protein is Photosystem I P700 chlorophyll a apoprotein A1.